The primary structure comprises 448 residues: Delta(14)-sterol reductase ERG24 (448 aa).

7 consecutive transmembrane segments (helical) span residues 18–38, 75–95, 108–128, 157–177, 251–271, 279–299, and 318–338; these read ISGALGITIGLPTLTVLFYLL, CWSAYLAWFFILVILDYLLPG, VLNYKINGLSMSSLLIVLLLA, IIICFLFSFMLAVFVYIISFI, VTDSMIVVNLLQAFYIFDGVL, MIDITTDGFGFMLSFGDLAWV, and NLGWTLSLLIVGLQALGFYIF. NADP(+) is bound by residues lysine 345, arginine 349, leucine 368, tryptophan 373, and 380–381; that span reads NY. Residues 394–414 traverse the membrane as a helical segment; that stretch reads PTGFQTPLTYFYVIYFASLLI. NADP(+)-binding positions include aspartate 420, 424 to 428, and tyrosine 435; that span reads CRAKY.

The protein belongs to the ERG4/ERG24 family.

It localises to the endoplasmic reticulum membrane. It catalyses the reaction 4,4-dimethyl-5alpha-cholesta-8,24-dien-3beta-ol + NADP(+) = 4,4-dimethyl-5alpha-cholesta-8,14,24-trien-3beta-ol + NADPH + H(+). The protein operates within steroid biosynthesis; zymosterol biosynthesis; zymosterol from lanosterol: step 2/6. Its function is as follows. C-14 sterol reductase; part of the third module of ergosterol biosynthesis pathway that includes the late steps of the pathway. ERG24 reduces the C14=C15 double bond of 4,4-dimethyl-cholesta-8,14,24-trienol to produce 4,4-dimethyl-cholesta-8,24-dienol. The third module or late pathway involves the ergosterol synthesis itself through consecutive reactions that mainly occur in the endoplasmic reticulum (ER) membrane. Firstly, the squalene synthase ERG9 catalyzes the condensation of 2 farnesyl pyrophosphate moieties to form squalene, which is the precursor of all steroids. Squalene synthase is crucial for balancing the incorporation of farnesyl diphosphate (FPP) into sterol and nonsterol isoprene synthesis. Secondly, the squalene epoxidase ERG1 catalyzes the stereospecific oxidation of squalene to (S)-2,3-epoxysqualene, which is considered to be a rate-limiting enzyme in steroid biosynthesis. Then, the lanosterol synthase ERG7 catalyzes the cyclization of (S)-2,3 oxidosqualene to lanosterol, a reaction that forms the sterol core. In the next steps, lanosterol is transformed to zymosterol through a complex process involving various demethylation, reduction and desaturation reactions. The lanosterol 14-alpha-demethylase ERG11 (also known as CYP51) catalyzes C14-demethylation of lanosterol to produce 4,4'-dimethyl cholesta-8,14,24-triene-3-beta-ol, which is critical for ergosterol biosynthesis. The C-14 reductase ERG24 reduces the C14=C15 double bond of 4,4-dimethyl-cholesta-8,14,24-trienol to produce 4,4-dimethyl-cholesta-8,24-dienol. 4,4-dimethyl-cholesta-8,24-dienol is substrate of the C-4 demethylation complex ERG25-ERG26-ERG27 in which ERG25 catalyzes the three-step monooxygenation required for the demethylation of 4,4-dimethyl and 4alpha-methylsterols, ERG26 catalyzes the oxidative decarboxylation that results in a reduction of the 3-beta-hydroxy group at the C-3 carbon to an oxo group, and ERG27 is responsible for the reduction of the keto group on the C-3. ERG28 has a role as a scaffold to help anchor ERG25, ERG26 and ERG27 to the endoplasmic reticulum and ERG29 regulates the activity of the iron-containing C4-methylsterol oxidase ERG25. Then, the sterol 24-C-methyltransferase ERG6 catalyzes the methyl transfer from S-adenosyl-methionine to the C-24 of zymosterol to form fecosterol. The C-8 sterol isomerase ERG2 catalyzes the reaction which results in unsaturation at C-7 in the B ring of sterols and thus converts fecosterol to episterol. The sterol-C5-desaturase ERG3 then catalyzes the introduction of a C-5 double bond in the B ring to produce 5-dehydroepisterol. The C-22 sterol desaturase ERG5 further converts 5-dehydroepisterol into ergosta-5,7,22,24(28)-tetraen-3beta-ol by forming the C-22(23) double bond in the sterol side chain. Finally, ergosta-5,7,22,24(28)-tetraen-3beta-ol is substrate of the C-24(28) sterol reductase ERG4 to produce ergosterol. The polypeptide is Delta(14)-sterol reductase ERG24 (Candida albicans (strain SC5314 / ATCC MYA-2876) (Yeast)).